Consider the following 293-residue polypeptide: 4-hydroxy-tetrahydrodipicolinate synthase (293 aa).

Residue Thr-45 coordinates pyruvate. Tyr-133 (proton donor/acceptor) is an active-site residue. The Schiff-base intermediate with substrate role is filled by Lys-162. Ile-204 is a pyruvate binding site.

This sequence belongs to the DapA family. As to quaternary structure, homotetramer; dimer of dimers.

It localises to the cytoplasm. The enzyme catalyses L-aspartate 4-semialdehyde + pyruvate = (2S,4S)-4-hydroxy-2,3,4,5-tetrahydrodipicolinate + H2O + H(+). Its pathway is amino-acid biosynthesis; L-lysine biosynthesis via DAP pathway; (S)-tetrahydrodipicolinate from L-aspartate: step 3/4. Catalyzes the condensation of (S)-aspartate-beta-semialdehyde [(S)-ASA] and pyruvate to 4-hydroxy-tetrahydrodipicolinate (HTPA). This is 4-hydroxy-tetrahydrodipicolinate synthase from Chelativorans sp. (strain BNC1).